The sequence spans 141 residues: Lutropin subunit beta (141 aa).

The first 20 residues, 1-20 (MEMLQGLLLWLLLSVGGVWA), serve as a signal peptide directing secretion. 6 cysteine pairs are disulfide-bonded: Cys-29-Cys-77, Cys-43-Cys-92, Cys-46-Cys-130, Cys-54-Cys-108, Cys-58-Cys-110, and Cys-113-Cys-120. N-linked (GlcNAc...) asparagine glycosylation occurs at Asn-33.

The protein belongs to the glycoprotein hormones subunit beta family. As to quaternary structure, heterodimer of a common alpha chain and a unique beta chain which confers biological specificity to thyrotropin, lutropin, follitropin and gonadotropin.

The protein localises to the secreted. Promotes spermatogenesis and ovulation by stimulating the testes and ovaries to synthesize steroids. The protein is Lutropin subunit beta (LHB1) of Ceratotherium simum (White rhinoceros).